Here is a 295-residue protein sequence, read N- to C-terminus: Light-independent protochlorophyllide reductase iron-sulfur ATP-binding protein (295 aa).

Residues 39-44 (GIGKST) and Lys68 each bind ATP. Residue Ser43 participates in Mg(2+) binding. 2 residues coordinate [4Fe-4S] cluster: Cys124 and Cys158. 209–210 (NR) serves as a coordination point for ATP.

Belongs to the NifH/BchL/ChlL family. In terms of assembly, homodimer. Protochlorophyllide reductase is composed of three subunits; ChlL, ChlN and ChlB. Requires [4Fe-4S] cluster as cofactor.

The catalysed reaction is chlorophyllide a + oxidized 2[4Fe-4S]-[ferredoxin] + 2 ADP + 2 phosphate = protochlorophyllide a + reduced 2[4Fe-4S]-[ferredoxin] + 2 ATP + 2 H2O. It functions in the pathway porphyrin-containing compound metabolism; chlorophyll biosynthesis (light-independent). Its function is as follows. Component of the dark-operative protochlorophyllide reductase (DPOR) that uses Mg-ATP and reduced ferredoxin to reduce ring D of protochlorophyllide (Pchlide) to form chlorophyllide a (Chlide). This reaction is light-independent. The L component serves as a unique electron donor to the NB-component of the complex, and binds Mg-ATP. This chain is Light-independent protochlorophyllide reductase iron-sulfur ATP-binding protein, found in Prochlorococcus marinus (strain AS9601).